A 547-amino-acid chain; its full sequence is Tripartite motif-containing protein 5 (547 aa).

Alanine 2 is subject to N-acetylalanine. Residues 15–59 form an RING-type zinc finger; it reads CPICLELLTEPLSLDCGHSFCQACITANHKESTLHQGERSCPLCR. Serine 86 bears the Phosphoserine mark. A B box-type zinc finger spans residues 91-132; sequence QKVDRCARHGEKLLLFCQQHGNVICWLCERSQEHRGHSTFLV. Residues cysteine 96, histidine 99, cysteine 118, and histidine 124 each contribute to the Zn(2+) site. Residues 132 to 225 adopt a coiled-coil conformation; it reads VEEVAQKYQE…AQSENDMVLQ (94 aa). Positions 186–199 are required for interaction with GABARAP and for autophagy; the sequence is FKQLRDILDCEESN. In terms of domain architecture, B30.2/SPRY spans 280-547; it reads PDLKGMLQVF…LPMTLCSPSS (268 aa).

Belongs to the TRIM/RBCC family. Can form homodimers and homotrimers. In addition to lower-order dimerization, also exhibits a higher-order multimerization and both low- and high-order multimerizations are essential for its restriction activity. Interacts with BTBD1 and BTBD2. Interacts with PSMC4, PSMC5, PSMD7 and HSPA8/HSC70. Interacts (via B30.2/SPRY domain) with HSPA1A/B. Interacts with PSMC2, MAP3K7/TAK1, TAB2 and TAB3. Interacts with SQSTM1. Interacts with TRIM6 and TRIM34. Interacts with ULK1 (phosphorylated form), GABARAP, GABARAPL1, GABARAPL2, MAP1LC3A, MAP1LC3C and BECN1. Post-translationally, degraded in a proteasome-independent fashion in the absence of viral infection but in a proteasome-dependent fashion following exposure to restriction sensitive virus. Autoubiquitinated in a RING finger- and UBE2D2-dependent manner. Monoubiquitinated by TRIM21. Deubiquitinated by Yersinia YopJ. Ubiquitination may not lead to proteasomal degradation.

It localises to the cytoplasm. It is found in the nucleus. The enzyme catalyses S-ubiquitinyl-[E2 ubiquitin-conjugating enzyme]-L-cysteine + [acceptor protein]-L-lysine = [E2 ubiquitin-conjugating enzyme]-L-cysteine + N(6)-ubiquitinyl-[acceptor protein]-L-lysine.. It functions in the pathway protein modification; protein ubiquitination. In terms of biological role, capsid-specific restriction factor that prevents infection from non-host-adapted retroviruses. Blocks viral replication early in the life cycle, after viral entry but before reverse transcription. In addition to acting as a capsid-specific restriction factor, also acts as a pattern recognition receptor that activates innate immune signaling in response to the retroviral capsid lattice. Binding to the viral capsid triggers its E3 ubiquitin ligase activity, and in concert with the heterodimeric ubiquitin conjugating enzyme complex UBE2V1-UBE2N (also known as UBC13-UEV1A complex) generates 'Lys-63'-linked polyubiquitin chains, which in turn are catalysts in the autophosphorylation of the MAP3K7/TAK1 complex (includes TAK1, TAB2, and TAB3). Activation of the MAP3K7/TAK1 complex by autophosphorylation results in the induction and expression of NF-kappa-B and MAPK-responsive inflammatory genes, thereby leading to an innate immune response in the infected cell. Plays a role in regulating autophagy through activation of autophagy regulator BECN1 by causing its dissociation from its inhibitors BCL2 and TAB2. This chain is Tripartite motif-containing protein 5 (TRIM5), found in Ateles geoffroyi (Black-handed spider monkey).